Consider the following 72-residue polypeptide: Translation initiation factor IF-1 (72 aa).

Residues 1–72 form the S1-like domain; sequence MSKDDVIEID…DKGRITYRYK (72 aa).

The protein belongs to the IF-1 family. In terms of assembly, component of the 30S ribosomal translation pre-initiation complex which assembles on the 30S ribosome in the order IF-2 and IF-3, IF-1 and N-formylmethionyl-tRNA(fMet); mRNA recruitment can occur at any time during PIC assembly.

The protein resides in the cytoplasm. Its function is as follows. One of the essential components for the initiation of protein synthesis. Stabilizes the binding of IF-2 and IF-3 on the 30S subunit to which N-formylmethionyl-tRNA(fMet) subsequently binds. Helps modulate mRNA selection, yielding the 30S pre-initiation complex (PIC). Upon addition of the 50S ribosomal subunit IF-1, IF-2 and IF-3 are released leaving the mature 70S translation initiation complex. The chain is Translation initiation factor IF-1 from Campylobacter hominis (strain ATCC BAA-381 / DSM 21671 / CCUG 45161 / LMG 19568 / NCTC 13146 / CH001A).